A 101-amino-acid chain; its full sequence is Phosphoribosyl-AMP cyclohydrolase (101 aa).

Asp-71 is a Mg(2+) binding site. Cys-72 is a binding site for Zn(2+). 2 residues coordinate Mg(2+): Asp-73 and Asp-75. Zn(2+)-binding residues include Cys-88 and Cys-95.

The protein belongs to the PRA-CH family. As to quaternary structure, homodimer. Mg(2+) serves as cofactor. The cofactor is Zn(2+).

Its subcellular location is the cytoplasm. It catalyses the reaction 1-(5-phospho-beta-D-ribosyl)-5'-AMP + H2O = 1-(5-phospho-beta-D-ribosyl)-5-[(5-phospho-beta-D-ribosylamino)methylideneamino]imidazole-4-carboxamide. The protein operates within amino-acid biosynthesis; L-histidine biosynthesis; L-histidine from 5-phospho-alpha-D-ribose 1-diphosphate: step 3/9. In terms of biological role, catalyzes the hydrolysis of the adenine ring of phosphoribosyl-AMP. This chain is Phosphoribosyl-AMP cyclohydrolase, found in Bacillus cereus (strain AH820).